Here is a 162-residue protein sequence, read N- to C-terminus: Serine-protein kinase RsbW (162 aa).

This sequence belongs to the anti-sigma-factor family.

The enzyme catalyses L-seryl-[protein] + ATP = O-phospho-L-seryl-[protein] + ADP + H(+). It carries out the reaction L-threonyl-[protein] + ATP = O-phospho-L-threonyl-[protein] + ADP + H(+). Its function is as follows. Negative regulator of sigma-B activity. Phosphorylates and inactivates its specific antagonist protein, RsbV. Upon phosphorylation of RsbV, RsbW is released and binds to sigma-B, thereby blocking its ability to form an RNA polymerase holoenzyme (E-sigma-B). This chain is Serine-protein kinase RsbW, found in Bacillus pumilus (strain SAFR-032).